A 302-amino-acid polypeptide reads, in one-letter code: Probable alpha-L-glutamate ligase (302 aa).

The 183-residue stretch at 112 to 294 (LQLLLKTGVP…IAAEIIDYIE (183 aa)) folds into the ATP-grasp domain. Residues K148, 185–186 (DF), D194, and 218–220 (RAN) each bind ATP. Positions 255, 267, and 269 each coordinate Mg(2+). The Mn(2+) site is built by D255, E267, and N269.

This sequence belongs to the RimK family. Requires Mg(2+) as cofactor. It depends on Mn(2+) as a cofactor.

In Haemophilus influenzae (strain 86-028NP), this protein is Probable alpha-L-glutamate ligase.